Here is a 658-residue protein sequence, read N- to C-terminus: Heat shock 70 kDa protein, mitochondrial (658 aa).

Residues 629 to 658 (KLDSSASKSSSTENKENKDNTTEAEFTEKK) are disordered. The span at 631–640 (DSSASKSSST) shows a compositional bias: low complexity. Over residues 641-658 (ENKENKDNTTEAEFTEKK) the composition is skewed to basic and acidic residues.

The protein belongs to the heat shock protein 70 family.

It is found in the mitochondrion. Functionally, may function in protein folding and assembly, and disassembly of protein complexes. The chain is Heat shock 70 kDa protein, mitochondrial (mhsp70) from Dictyostelium discoideum (Social amoeba).